The following is a 325-amino-acid chain: Nod factor export ATP-binding protein I (325 aa).

Positions 27–257 (LELRKVRKQY…QIGCDVVEVY (231 aa)) constitute an ABC transporter domain. Residue 59 to 66 (GPNGAGKT) participates in ATP binding.

Belongs to the ABC transporter superfamily. Lipooligosaccharide exporter (TC 3.A.1.102) family. In terms of assembly, the complex is composed of two ATP-binding proteins (NodI) and two transmembrane proteins (NodJ).

The protein localises to the cell inner membrane. Part of the ABC transporter complex NodIJ involved in the export of the nodulation factors (Nod factors), the bacterial signal molecules that induce symbiosis and subsequent nodulation induction. Nod factors are LCO (lipo-chitin oligosaccharide), a modified beta-1,4-linked N-acetylglucosamine oligosaccharide. This subunit is responsible for energy coupling to the transport system. The protein is Nod factor export ATP-binding protein I of Cupriavidus pinatubonensis (strain JMP 134 / LMG 1197) (Cupriavidus necator (strain JMP 134)).